A 146-amino-acid polypeptide reads, in one-letter code: Hemoglobin subunit beta-1 (146 aa).

The region spanning 2–146 (HWTEKERTII…VVSALGKQYH (145 aa)) is the Globin domain. Heme b is bound by residues histidine 63 and histidine 92.

Belongs to the globin family. In terms of assembly, hb1 is a heterotetramer of two alpha chains and two beta-1 chains. As to expression, red blood cells.

Functionally, involved in oxygen transport from gills to the various peripheral tissues. The sequence is that of Hemoglobin subunit beta-1 from Dissostichus eleginoides (Patagonian toothfish).